The sequence spans 391 residues: GTPase Obg (391 aa).

The Obg domain maps to 1 to 159 (MKFIDEALIR…RDLLLELMLL (159 aa)). An OBG-type G domain is found at 160–333 (ADVGMLGLPN…LTRDIMDFIE (174 aa)). Residues 166-173 (GLPNAGKS), 191-195 (FTTLV), 213-216 (DIPG), 283-286 (NKID), and 314-316 (SAA) contribute to the GTP site. Serine 173 and threonine 193 together coordinate Mg(2+).

The protein belongs to the TRAFAC class OBG-HflX-like GTPase superfamily. OBG GTPase family. As to quaternary structure, monomer. Requires Mg(2+) as cofactor.

The protein resides in the cytoplasm. Functionally, an essential GTPase which binds GTP, GDP and possibly (p)ppGpp with moderate affinity, with high nucleotide exchange rates and a fairly low GTP hydrolysis rate. Plays a role in control of the cell cycle, stress response, ribosome biogenesis and in those bacteria that undergo differentiation, in morphogenesis control. The sequence is that of GTPase Obg from Actinobacillus pleuropneumoniae serotype 7 (strain AP76).